Consider the following 476-residue polypeptide: Aspartyl/glutamyl-tRNA(Asn/Gln) amidotransferase subunit B (476 aa).

The protein belongs to the GatB/GatE family. GatB subfamily. As to quaternary structure, heterotrimer of A, B and C subunits.

It carries out the reaction L-glutamyl-tRNA(Gln) + L-glutamine + ATP + H2O = L-glutaminyl-tRNA(Gln) + L-glutamate + ADP + phosphate + H(+). It catalyses the reaction L-aspartyl-tRNA(Asn) + L-glutamine + ATP + H2O = L-asparaginyl-tRNA(Asn) + L-glutamate + ADP + phosphate + 2 H(+). Its function is as follows. Allows the formation of correctly charged Asn-tRNA(Asn) or Gln-tRNA(Gln) through the transamidation of misacylated Asp-tRNA(Asn) or Glu-tRNA(Gln) in organisms which lack either or both of asparaginyl-tRNA or glutaminyl-tRNA synthetases. The reaction takes place in the presence of glutamine and ATP through an activated phospho-Asp-tRNA(Asn) or phospho-Glu-tRNA(Gln). The sequence is that of Aspartyl/glutamyl-tRNA(Asn/Gln) amidotransferase subunit B from Listeria welshimeri serovar 6b (strain ATCC 35897 / DSM 20650 / CCUG 15529 / CIP 8149 / NCTC 11857 / SLCC 5334 / V8).